A 303-amino-acid polypeptide reads, in one-letter code: Thioesterase poxG (303 aa).

Belongs to the lcsJ thioesterase family.

The protein operates within secondary metabolite biosynthesis. Its function is as follows. Thioesterase; part of the gene cluster that mediates the biosynthesis of oxaleimides, cytotoxic compounds containing an unusual disubstituted succinimide moiety. The first step of the pathway is provided by the HR-PKS poxF that serves in a new mode of collaborative biosynthesis with the PKS-NRPS poxE, by providing the olefin containing amino acid substrate via the synthesis of an ACP-bound dec-4-enoate. The cytochrome P450 monooxygenase poxM-catalyzed oxidation at the alpha-position creates the enzyme-bound 2-hydroxydec-4-enoyl-ACP thioester, which may be prone to spontaneous hydrolysis to yield 2-hydroxydec-4-enoic acid due to increased electrophilicity of the carbonyl. 2-hydroxydec-4-enoic acid can then be further oxidized by poxM to yield the alpha-ketoacid 2-oxodec-4-enoicacid, which is reductively aminated by the aminotransferase poxL to yield (S,E)-2-aminodec-4-enoic acid. The Hybrid PKS-NRPS synthetase poxE then performs condensation between the octaketide product of its PKS modules and the amino group of (S,E)-2-aminodec-4-enoic acid which is activated and incorporated by the adenylation domain. The resulting aminoacyl product can be cyclized by the Diels-Alderase PoxQ and reductively released by the reductive (R) domain of poxE to yield an aldehyde intermediate. The released aldehyde is then substrate for a Knoevenagel condensation by the hydrolyase poxO followed by an oxidation at the 5-position of the pyrrolidone ring. The presence of the olefin from the amino acid building block allows for migration of the substituted allyl group to occur. This allylic transposition reaction takes place in a conjugate addition, semipinacol-like fashion to yield a succinimide intermediate. Iterative two-electron oxidations of the C7 methyl of the succinimide intermediate to the carboxylic acid can be catalyzed by one of two remaining cytochrome P450 monooxygenasess poxC or poxD to yield oxaleimide A. Subsequent oxidation yields the maleimide scaffold oxaleimide I. Both oxaleimide A and oxaleimide I can undergo oxidative modifications in the decalin ring to yield the series of products oxaleimides B to H. This Penicillium oxalicum protein is Thioesterase poxG.